The following is a 122-amino-acid chain: Large ribosomal subunit protein uL24 (122 aa).

Residues 43 to 64 (IRKHHRRDMPTPQGGTTKGGII) form a disordered region.

This sequence belongs to the universal ribosomal protein uL24 family. As to quaternary structure, part of the 50S ribosomal subunit.

In terms of biological role, one of two assembly initiator proteins, it binds directly to the 5'-end of the 23S rRNA, where it nucleates assembly of the 50S subunit. Its function is as follows. One of the proteins that surrounds the polypeptide exit tunnel on the outside of the subunit. In Cutibacterium acnes (strain DSM 16379 / KPA171202) (Propionibacterium acnes), this protein is Large ribosomal subunit protein uL24.